A 315-amino-acid chain; its full sequence is Ribose-phosphate pyrophosphokinase (315 aa).

ATP is bound by residues 40 to 42 (DGE) and 99 to 100 (RQ). 2 residues coordinate Mg(2+): His-133 and Asp-175. Residue Lys-198 is part of the active site. D-ribose 5-phosphate is bound by residues Arg-200, Asp-224, and 228–232 (DTAHS).

The protein belongs to the ribose-phosphate pyrophosphokinase family. Class I subfamily. In terms of assembly, homohexamer. The cofactor is Mg(2+).

It is found in the cytoplasm. The enzyme catalyses D-ribose 5-phosphate + ATP = 5-phospho-alpha-D-ribose 1-diphosphate + AMP + H(+). The protein operates within metabolic intermediate biosynthesis; 5-phospho-alpha-D-ribose 1-diphosphate biosynthesis; 5-phospho-alpha-D-ribose 1-diphosphate from D-ribose 5-phosphate (route I): step 1/1. Functionally, involved in the biosynthesis of the central metabolite phospho-alpha-D-ribosyl-1-pyrophosphate (PRPP) via the transfer of pyrophosphoryl group from ATP to 1-hydroxyl of ribose-5-phosphate (Rib-5-P). The polypeptide is Ribose-phosphate pyrophosphokinase (Thermotoga maritima (strain ATCC 43589 / DSM 3109 / JCM 10099 / NBRC 100826 / MSB8)).